A 401-amino-acid chain; its full sequence is Patatin-like protein 4 (401 aa).

In terms of domain architecture, PNPLA spans 17-218 (LSLDGGGVRG…TANDPTLVGM (202 aa)). The GXGXXG motif lies at 21 to 26 (GGGVRG). The short motif at 60–64 (GTSTG) is the GXSXG element. Ser-62 functions as the Nucleophile in the catalytic mechanism. The Proton acceptor role is filled by Asp-205. A DGA/G motif is present at residues 205-207 (DGG).

Belongs to the patatin family.

Its function is as follows. Possesses non-specific lipolytic acyl hydrolase (LAH) activity. Hydrolyzes phospholipids as well as galactolipids. May play a role in disease resistance. In Arabidopsis thaliana (Mouse-ear cress), this protein is Patatin-like protein 4 (PLP4).